The chain runs to 513 residues: Tyrosine-protein phosphatase non-receptor type substrate 1 (513 aa).

The N-terminal stretch at 1–31 (MEPAGPAPGRLGPLLLCLLLSASCFCTGATG) is a signal peptide. Positions 32 to 137 (KELKVTQPEK…SSEPDTEIQS (106 aa)) constitute an Ig-like V-type domain. The Extracellular portion of the chain corresponds to 32–373 (KELKVTQPEK…PDNNATHNWN (342 aa)). Residues Asn-54, Asn-92, Asn-168, Asn-180, Asn-205, Asn-209, Asn-246, Asn-271, Asn-293, Asn-302, Asn-312, Asn-320, Asn-345, and Asn-367 are each glycosylated (N-linked (GlcNAc...) asparagine). A disulfide bond links Cys-55 and Cys-121. Ig-like C1-type domains follow at residues 149–248 (PSPP…ANLS) and 255–343 (PTVK…PAIT). The cysteines at positions 171 and 229 are disulfide-linked. A disulfide bridge connects residues Cys-274 and Cys-332. The chain crosses the membrane as a helical span at residues 374–394 (VFIGVGVACALLVVLLMAALY). The Cytoplasmic segment spans residues 395–511 (LLRIKQKKAK…FSEYASVQVQ (117 aa)). At Tyr-440 the chain carries Phosphotyrosine; by Tyr-kinases. The SH2-binding signature appears at 440–443 (YADL). Positions 444 to 513 (NLPKEKKPAP…EYASVQVQRK (70 aa)) are disordered. An SH3-binding motif is present at residues 450-455 (KPAPRA). A phosphotyrosine; by Tyr-kinases mark is found at Tyr-464, Tyr-481, and Tyr-505. Short sequence motifs (SH2-binding) lie at residues 464-467 (YASI), 481-484 (YADL), and 505-508 (YASV). The segment covering 504–513 (EYASVQVQRK) has biased composition (polar residues).

As to quaternary structure, binds PTPN11 when tyrosine-phosphorylated, except in macrophages, where it primarily binds PTPN6. Binds GRB2 vitro. Binds FGR. Binds JAK2 irrespective of its phosphorylation status and forms a stable complex. Binds SCAP1 and/or SCAP2. The resulting complex recruits FYB1. Binds PTK2B. Interacts with TRIM2. In terms of processing, N-glycosylated. Post-translationally, phosphorylated on tyrosine residues. In terms of tissue distribution, highly expressed in cerebral cortex, brain, spinal cord, cerebellum and spleen, and at much lower levels in kidney, thymus, heart, lung and liver. Within the cerebellum, highly expressed throughout the molecular layer, and in synaptic glomeruli in the granule cell layer. Detected in neurons of the hippocampus and dentate gyrus, and in olfactory bulb. Not detected in Purkinje cells. Highly expressed in the plexiform layers, optic fiber layer and the outer segments of the photoreceptor layer in the retina. Highly expressed in macrophages. Isoform 3 is detected at very low levels in all tissues tested.

Its subcellular location is the membrane. Its function is as follows. Immunoglobulin-like cell surface receptor for CD47. Acts as a docking protein and induces translocation of PTPN6, PTPN11 and other binding partners from the cytosol to the plasma membrane. Supports adhesion of cerebellar neurons, neurite outgrowth and glial cell attachment. May play a key role in intracellular signaling during synaptogenesis and in synaptic function. Involved in the negative regulation of receptor tyrosine kinase-coupled cellular responses induced by cell adhesion, growth factors or insulin. Mediates negative regulation of phagocytosis, mast cell activation and dendritic cell activation. CD47 binding prevents maturation of immature dendritic cells and inhibits cytokine production by mature dendritic cells. Plays a role in antiviral immunity and limits new world arenavirus infection by decreasing virus internalization. Receptor for THBS1. Interaction with THBS1 stimulates phosphorylation of SIRPA. In response to THBS1, involved in ROS signaling in non-phagocytic cells, stimulating NADPH oxidase-derived ROS production. The protein is Tyrosine-protein phosphatase non-receptor type substrate 1 (Sirpa) of Mus musculus (Mouse).